Reading from the N-terminus, the 654-residue chain is Probable Xaa-Pro aminopeptidase P (654 aa).

4 residues coordinate Mn(2+): Asp-449, Asp-460, Glu-558, and Glu-572.

Belongs to the peptidase M24B family. Requires Mn(2+) as cofactor.

The enzyme catalyses Release of any N-terminal amino acid, including proline, that is linked to proline, even from a dipeptide or tripeptide.. Its function is as follows. Catalyzes the removal of a penultimate prolyl residue from the N-termini of peptides. The polypeptide is Probable Xaa-Pro aminopeptidase P (ampp) (Neosartorya fischeri (strain ATCC 1020 / DSM 3700 / CBS 544.65 / FGSC A1164 / JCM 1740 / NRRL 181 / WB 181) (Aspergillus fischerianus)).